The following is a 362-amino-acid chain: 3-dehydroquinate synthase (362 aa).

Residues 71 to 76 (DGEQYK), 105 to 109 (GVIGD), 129 to 130 (TT), lysine 142, lysine 151, and 169 to 172 (CLKT) each bind NAD(+). The Zn(2+) site is built by glutamate 184, histidine 247, and histidine 264.

Belongs to the sugar phosphate cyclases superfamily. Dehydroquinate synthase family. Co(2+) is required as a cofactor. It depends on Zn(2+) as a cofactor. The cofactor is NAD(+).

The protein resides in the cytoplasm. It catalyses the reaction 7-phospho-2-dehydro-3-deoxy-D-arabino-heptonate = 3-dehydroquinate + phosphate. Its pathway is metabolic intermediate biosynthesis; chorismate biosynthesis; chorismate from D-erythrose 4-phosphate and phosphoenolpyruvate: step 2/7. In terms of biological role, catalyzes the conversion of 3-deoxy-D-arabino-heptulosonate 7-phosphate (DAHP) to dehydroquinate (DHQ). This is 3-dehydroquinate synthase from Salmonella agona (strain SL483).